We begin with the raw amino-acid sequence, 455 residues long: Chromosomal replication initiator protein DnaA (455 aa).

Residues 1–74 (MFDIEKFWQH…IQSAYGYAGI (74 aa)) are domain I, interacts with DnaA modulators. Residues 74–117 (IEILPVFQINENNDSPERIVTPEPRYAIQLQQEKRAHKQFTKNL) are domain II. The domain III, AAA+ region stretch occupies residues 118–334 (KLNEKYTFDN…GALVKVQAYA (217 aa)). Positions 162, 164, 165, and 166 each coordinate ATP. The segment at 335–455 (TIERADINVN…VFDLKQMIEH (121 aa)) is domain IV, binds dsDNA.

Belongs to the DnaA family. Oligomerizes as a right-handed, spiral filament on DNA at oriC.

The protein localises to the cytoplasm. Functionally, plays an essential role in the initiation and regulation of chromosomal replication. ATP-DnaA binds to the origin of replication (oriC) to initiate formation of the DNA replication initiation complex once per cell cycle. Binds the DnaA box (a 9 base pair repeat at the origin) and separates the double-stranded (ds)DNA. Forms a right-handed helical filament on oriC DNA; dsDNA binds to the exterior of the filament while single-stranded (ss)DNA is stabiized in the filament's interior. The ATP-DnaA-oriC complex binds and stabilizes one strand of the AT-rich DNA unwinding element (DUE), permitting loading of DNA polymerase. After initiation quickly degrades to an ADP-DnaA complex that is not apt for DNA replication. Binds acidic phospholipids. The polypeptide is Chromosomal replication initiator protein DnaA (Lactobacillus helveticus (strain DPC 4571)).